The primary structure comprises 308 residues: N-acetylmuramic acid 6-phosphate etherase (308 aa).

The SIS domain occupies 62-225 (ITDAFKVGGR…TTASMIRLGK (164 aa)). Glu-90 acts as the Proton donor in catalysis. Glu-121 is a catalytic residue.

It belongs to the GCKR-like family. MurNAc-6-P etherase subfamily. Homodimer.

The enzyme catalyses N-acetyl-D-muramate 6-phosphate + H2O = N-acetyl-D-glucosamine 6-phosphate + (R)-lactate. The protein operates within amino-sugar metabolism; 1,6-anhydro-N-acetylmuramate degradation. Its pathway is amino-sugar metabolism; N-acetylmuramate degradation. It functions in the pathway cell wall biogenesis; peptidoglycan recycling. Specifically catalyzes the cleavage of the D-lactyl ether substituent of MurNAc 6-phosphate, producing GlcNAc 6-phosphate and D-lactate. Together with AnmK, is also required for the utilization of anhydro-N-acetylmuramic acid (anhMurNAc) either imported from the medium or derived from its own cell wall murein, and thus plays a role in cell wall recycling. In Vibrio campbellii (strain ATCC BAA-1116), this protein is N-acetylmuramic acid 6-phosphate etherase.